The sequence spans 276 residues: Reaction center protein L chain (276 aa).

Helical transmembrane passes span 33–56, 85–113, and 116–141; these read GFFG…GAAL, GLWQ…RKLG, and YHIP…VMMG. The (7R,8Z)-bacteriochlorophyll b site is built by His154 and His174. The chain crosses the membrane as a helical span at residues 171–200; sequence NPAHMLGITLFFTTCLALALHGSLILSAAN. His191 contacts Fe cation. Residue Phe217 participates in a ubiquinone binding. The chain crosses the membrane as a helical span at residues 226-252; sequence GTLGIHRVGLILALSAVVWSIICMILS. Residue His231 participates in Fe cation binding.

It belongs to the reaction center PufL/M/PsbA/D family. In terms of assembly, reaction center is composed of four bacteriochlorophylls, two bacteriopheophytins, two ubiquinones, one iron, and three highly hydrophobic polypeptide chains (designated L, M, and H).

The protein resides in the cellular chromatophore membrane. Its function is as follows. The reaction center is a membrane-bound complex that mediates the initial photochemical event in the electron transfer process of photosynthesis. In Rhodospirillum rubrum, this protein is Reaction center protein L chain (pufL).